A 224-amino-acid polypeptide reads, in one-letter code: ATP synthase subunit a (224 aa).

Transmembrane regions (helical) follow at residues 17-37 (LSLN…IYWL), 72-92 (IFIS…FPYI), 99-119 (LTLT…YGWI), 125-145 (MFAH…MVCI), 155-175 (GTLA…LTLL), and 184-204 (YLLV…ESAV).

The protein belongs to the ATPase A chain family. F-type ATPases have 2 components, CF(1) - the catalytic core - and CF(0) - the membrane proton channel. CF(1) has five subunits: alpha(3), beta(3), gamma(1), delta(1), epsilon(1). CF(0) has three main subunits: a, b and c.

It localises to the mitochondrion inner membrane. In terms of biological role, mitochondrial membrane ATP synthase (F(1)F(0) ATP synthase or Complex V) produces ATP from ADP in the presence of a proton gradient across the membrane which is generated by electron transport complexes of the respiratory chain. F-type ATPases consist of two structural domains, F(1) - containing the extramembraneous catalytic core and F(0) - containing the membrane proton channel, linked together by a central stalk and a peripheral stalk. During catalysis, ATP synthesis in the catalytic domain of F(1) is coupled via a rotary mechanism of the central stalk subunits to proton translocation. Key component of the proton channel; it may play a direct role in the translocation of protons across the membrane. This Drosophila yakuba (Fruit fly) protein is ATP synthase subunit a (mt:ATPase6).